A 254-amino-acid chain; its full sequence is MRVLLSNDDGVHAAGLRALAEAFHGDEVWVVAPDREQSASSHAISLHRPLRLLEVAPRWYAVDGTPTDAVYMGLNLVLRDARPDVVVSGVNHGPNLGNDVLYSGTVAAAMEGALLGVNAVAVSLAAPPPHDFGEAARFAAALARQVVARPPPAPVLLNVNVPPGPVRGYRFTRLGRRTYGNEVVEKTDPRGRKYYWIGGEGRVHNEDIPGSDCNAVLLERLAAVTPLHLDGTHDPMFQELRSWTVPGYEKEPAP.

Positions 8, 9, 38, and 91 each coordinate a divalent metal cation.

Belongs to the SurE nucleotidase family. A divalent metal cation is required as a cofactor.

The protein localises to the cytoplasm. It carries out the reaction a ribonucleoside 5'-phosphate + H2O = a ribonucleoside + phosphate. Functionally, nucleotidase that shows phosphatase activity on nucleoside 5'-monophosphates. This is 5'-nucleotidase SurE from Anaeromyxobacter dehalogenans (strain 2CP-C).